The following is a 423-amino-acid chain: Putative RING-H2 finger protein ATL49 (423 aa).

Residues 43–63 (ILLIIIILSIIFFISGLLHIL) form a helical membrane-spanning segment. The segment at 126 to 168 (CPVCLCEFETEDKLRLLPKCSHAFHVECIDTWLLSHSTCPLCR) adopts an RING-type; atypical zinc-finger fold. Disordered regions lie at residues 213–236 (NNDS…DMDG) and 377–399 (HRIP…KTPS). Basic and acidic residues predominate over residues 379–389 (IPPEESLKSEN).

This sequence belongs to the RING-type zinc finger family. ATL subfamily.

The protein localises to the membrane. The enzyme catalyses S-ubiquitinyl-[E2 ubiquitin-conjugating enzyme]-L-cysteine + [acceptor protein]-L-lysine = [E2 ubiquitin-conjugating enzyme]-L-cysteine + N(6)-ubiquitinyl-[acceptor protein]-L-lysine.. Its pathway is protein modification; protein ubiquitination. Its function is as follows. May be involved in female gametophyte development. The sequence is that of Putative RING-H2 finger protein ATL49 (ATL49) from Arabidopsis thaliana (Mouse-ear cress).